The chain runs to 166 residues: uncharacterized protein (166 aa).

A disordered region spans residues 28–55 (SRQVHPPWPVPCKSKLQEQDSSESKESK). The segment covering 42-55 (KLQEQDSSESKESK) has biased composition (basic and acidic residues). The HTH araC/xylS-type domain occupies 67–163 (QNAMLYIENN…NYTPKQFKRT (97 aa)). DNA-binding regions (H-T-H motif) lie at residues 84-105 (DTVA…KLAT) and 130-153 (VTET…KKRT).

This is an uncharacterized protein from Pseudoalteromonas carrageenovora (Alteromonas carrageenovora).